Consider the following 434-residue polypeptide: Bifunctional protein GlmU (434 aa).

The interval Met1–Lys226 is pyrophosphorylase. UDP-N-acetyl-alpha-D-glucosamine is bound by residues Leu11–Gly14, Lys25, Gln77, and Gly84–Thr85. Mg(2+) is bound at residue Asp105. Gly138, Glu152, Asn167, and Asn224 together coordinate UDP-N-acetyl-alpha-D-glucosamine. Asn224 is a binding site for Mg(2+). The tract at residues Lys227–Ser247 is linker. The interval Gly248 to Lys434 is N-acetyltransferase. UDP-N-acetyl-alpha-D-glucosamine-binding residues include Arg311 and Lys328. His339 acts as the Proton acceptor in catalysis. Residues Tyr342 and Asn353 each contribute to the UDP-N-acetyl-alpha-D-glucosamine site. Acetyl-CoA-binding positions include Ala356, Asn362 to Tyr363, Ser381, and Ala399.

In the N-terminal section; belongs to the N-acetylglucosamine-1-phosphate uridyltransferase family. The protein in the C-terminal section; belongs to the transferase hexapeptide repeat family. Homotrimer. Mg(2+) is required as a cofactor.

It is found in the cytoplasm. It catalyses the reaction alpha-D-glucosamine 1-phosphate + acetyl-CoA = N-acetyl-alpha-D-glucosamine 1-phosphate + CoA + H(+). The catalysed reaction is N-acetyl-alpha-D-glucosamine 1-phosphate + UTP + H(+) = UDP-N-acetyl-alpha-D-glucosamine + diphosphate. Its pathway is nucleotide-sugar biosynthesis; UDP-N-acetyl-alpha-D-glucosamine biosynthesis; N-acetyl-alpha-D-glucosamine 1-phosphate from alpha-D-glucosamine 6-phosphate (route II): step 2/2. It participates in nucleotide-sugar biosynthesis; UDP-N-acetyl-alpha-D-glucosamine biosynthesis; UDP-N-acetyl-alpha-D-glucosamine from N-acetyl-alpha-D-glucosamine 1-phosphate: step 1/1. The protein operates within bacterial outer membrane biogenesis; LPS lipid A biosynthesis. In terms of biological role, catalyzes the last two sequential reactions in the de novo biosynthetic pathway for UDP-N-acetylglucosamine (UDP-GlcNAc). The C-terminal domain catalyzes the transfer of acetyl group from acetyl coenzyme A to glucosamine-1-phosphate (GlcN-1-P) to produce N-acetylglucosamine-1-phosphate (GlcNAc-1-P), which is converted into UDP-GlcNAc by the transfer of uridine 5-monophosphate (from uridine 5-triphosphate), a reaction catalyzed by the N-terminal domain. This Sulfurimonas denitrificans (strain ATCC 33889 / DSM 1251) (Thiomicrospira denitrificans (strain ATCC 33889 / DSM 1251)) protein is Bifunctional protein GlmU.